Consider the following 502-residue polypeptide: Alpha-ketoglutarate-dependent dioxygenase FTO (502 aa).

Residues 32–324 (TPKDDEFYQQ…SSTHRVAECS (293 aa)) are fe2OG dioxygenase domain. Substrate is bound by residues R96 and Y108. Residue N202 coordinates 2-oxoglutarate. Residues 210–221 (PYLKEEPYFGMG) are loop L1; predicted to block binding of double-stranded DNA or RNA. At K213 the chain carries N6-acetyllysine. Fe cation-binding residues include H228 and D230. 228–231 (HHDE) is a substrate binding site. Y292 contributes to the 2-oxoglutarate binding site. H304 contacts Fe cation. 2-oxoglutarate contacts are provided by residues 313–315 (RFS), T317, and R319.

Belongs to the fto family. In terms of assembly, monomer. May also exist as homodimer. It depends on Fe(2+) as a cofactor. In terms of tissue distribution, ubiquitous. Highly expressed in teeth and weakly in bone.

It is found in the nucleus. The protein localises to the nucleus speckle. It localises to the cytoplasm. It catalyses the reaction a 5'-end (N(7)-methyl 5'-triphosphoguanosine)-(N(6),2'-O-dimethyladenosine) in mRNA + 2-oxoglutarate + O2 = a 5'-end (N(7)-methyl 5'-triphosphoguanosine)-(2'-O-methyladenosine) in mRNA + formaldehyde + succinate + CO2. The catalysed reaction is an N(6)-methyladenosine in mRNA + 2-oxoglutarate + O2 = an adenosine in mRNA + formaldehyde + succinate + CO2. The enzyme catalyses N(6)-methyladenosine in U6 snRNA + 2-oxoglutarate + O2 = adenosine in U6 snRNA + formaldehyde + succinate + CO2. It carries out the reaction a 5'-end (N(7)-methyl 5'-triphosphoguanosine)-(N(6),2'-O-dimethyladenosine) in U6 snRNA + 2-oxoglutarate + O2 = a 5'-end (N(7)-methyl 5'-triphosphoguanosine)-(2'-O-methyladenosine) in U6 snRNA + formaldehyde + succinate + CO2. It catalyses the reaction an N(1)-methyladenosine in tRNA + 2-oxoglutarate + O2 = an adenosine in tRNA + formaldehyde + succinate + CO2. With respect to regulation, activated by ascorbate. Inhibited by N-oxalylglycine, fumarate and succinate. In terms of biological role, RNA demethylase that mediates oxidative demethylation of different RNA species, such as mRNAs, tRNAs and snRNAs, and acts as a regulator of fat mass, adipogenesis and energy homeostasis. Specifically demethylates N(6)-methyladenosine (m6A) RNA, the most prevalent internal modification of messenger RNA (mRNA) in higher eukaryotes. M6A demethylation by FTO affects mRNA expression and stability. Also able to demethylate m6A in U6 small nuclear RNA (snRNA). Mediates demethylation of N(6),2'-O-dimethyladenosine cap (m6A(m)), by demethylating the N(6)-methyladenosine at the second transcribed position of mRNAs and U6 snRNA. Demethylation of m6A(m) in the 5'-cap by FTO affects mRNA stability by promoting susceptibility to decapping. Also acts as a tRNA demethylase by removing N(1)-methyladenine from various tRNAs. Has no activity towards 1-methylguanine. Has no detectable activity towards double-stranded DNA. Also able to repair alkylated DNA and RNA by oxidative demethylation: demethylates single-stranded RNA containing 3-methyluracil, single-stranded DNA containing 3-methylthymine and has low demethylase activity towards single-stranded DNA containing 1-methyladenine or 3-methylcytosine. Ability to repair alkylated DNA and RNA is however unsure in vivo. Involved in the regulation of fat mass, adipogenesis and body weight, thereby contributing to the regulation of body size and body fat accumulation. Involved in the regulation of thermogenesis and the control of adipocyte differentiation into brown or white fat cells. Regulates activity of the dopaminergic midbrain circuitry via its ability to demethylate m6A in mRNAs. The polypeptide is Alpha-ketoglutarate-dependent dioxygenase FTO (Rattus norvegicus (Rat)).